The chain runs to 193 residues: dTTP/UTP pyrophosphatase (193 aa).

Catalysis depends on D70, which acts as the Proton acceptor.

Belongs to the Maf family. YhdE subfamily. The cofactor is a divalent metal cation.

It localises to the cytoplasm. The catalysed reaction is dTTP + H2O = dTMP + diphosphate + H(+). The enzyme catalyses UTP + H2O = UMP + diphosphate + H(+). Its function is as follows. Nucleoside triphosphate pyrophosphatase that hydrolyzes dTTP and UTP. May have a dual role in cell division arrest and in preventing the incorporation of modified nucleotides into cellular nucleic acids. This is dTTP/UTP pyrophosphatase from Alcanivorax borkumensis (strain ATCC 700651 / DSM 11573 / NCIMB 13689 / SK2).